A 571-amino-acid chain; its full sequence is Carboxylesterase 3B (571 aa).

Residues Met1–Gly31 form the signal peptide. Cysteines 100 and 127 form a disulfide. Ser232 functions as the Acyl-ester intermediate in the catalytic mechanism. Cys284 and Cys295 are oxidised to a cystine. A glycan (N-linked (GlcNAc...) asparagine) is linked at Asn311. Catalysis depends on charge relay system residues Glu347 and His460. The Prevents secretion from ER signature appears at Pro568–Leu571.

Belongs to the type-B carboxylesterase/lipase family.

Its subcellular location is the endoplasmic reticulum lumen. It catalyses the reaction a carboxylic ester + H2O = an alcohol + a carboxylate + H(+). Involved in the detoxification of xenobiotics and in the activation of ester and amide prodrugs. This Mus musculus (Mouse) protein is Carboxylesterase 3B (Ces3b).